The primary structure comprises 127 residues: Large ribosomal subunit protein uL18 (127 aa).

It belongs to the universal ribosomal protein uL18 family. As to quaternary structure, part of the 50S ribosomal subunit; part of the 5S rRNA/L5/L18/L25 subcomplex. Contacts the 5S and 23S rRNAs.

This is one of the proteins that bind and probably mediate the attachment of the 5S RNA into the large ribosomal subunit, where it forms part of the central protuberance. The chain is Large ribosomal subunit protein uL18 from Streptomyces avermitilis (strain ATCC 31267 / DSM 46492 / JCM 5070 / NBRC 14893 / NCIMB 12804 / NRRL 8165 / MA-4680).